A 389-amino-acid chain; its full sequence is Putative phosphoserine aminotransferase (389 aa).

Residue Arg45 participates in L-glutamate binding. Pyridoxal 5'-phosphate-binding positions include 79–80 (GT), Trp114, Thr169, Asp191, and Gln214. Lys215 is subject to N6-(pyridoxal phosphate)lysine. Residue 265–266 (NT) coordinates pyridoxal 5'-phosphate.

The protein belongs to the class-V pyridoxal-phosphate-dependent aminotransferase family. SerC subfamily. Homodimer. Pyridoxal 5'-phosphate is required as a cofactor.

The enzyme catalyses O-phospho-L-serine + 2-oxoglutarate = 3-phosphooxypyruvate + L-glutamate. The catalysed reaction is 4-(phosphooxy)-L-threonine + 2-oxoglutarate = (R)-3-hydroxy-2-oxo-4-phosphooxybutanoate + L-glutamate. It functions in the pathway amino-acid biosynthesis; L-serine biosynthesis; L-serine from 3-phospho-D-glycerate: step 2/3. The protein operates within cofactor biosynthesis; pyridoxine 5'-phosphate biosynthesis; pyridoxine 5'-phosphate from D-erythrose 4-phosphate: step 3/5. In terms of biological role, catalyzes the reversible conversion of 3-phosphohydroxypyruvate to phosphoserine and of 3-hydroxy-2-oxo-4-phosphonooxybutanoate to phosphohydroxythreonine. The polypeptide is Putative phosphoserine aminotransferase (Schizosaccharomyces pombe (strain 972 / ATCC 24843) (Fission yeast)).